We begin with the raw amino-acid sequence, 201 residues long: Glycerol-3-phosphate acyltransferase (201 aa).

The next 6 helical transmembrane spans lie at 10–30 (MLIG…GLIL), 60–80 (LAAA…LIAA), 86–106 (AAIA…WIGF), 116–136 (LGVL…AWIV), 139–159 (LLTR…PIAL), and 166–186 (ALAA…RANI).

This sequence belongs to the PlsY family. As to quaternary structure, probably interacts with PlsX.

It is found in the cell inner membrane. It catalyses the reaction an acyl phosphate + sn-glycerol 3-phosphate = a 1-acyl-sn-glycero-3-phosphate + phosphate. It functions in the pathway lipid metabolism; phospholipid metabolism. Its function is as follows. Catalyzes the transfer of an acyl group from acyl-phosphate (acyl-PO(4)) to glycerol-3-phosphate (G3P) to form lysophosphatidic acid (LPA). This enzyme utilizes acyl-phosphate as fatty acyl donor, but not acyl-CoA or acyl-ACP. The polypeptide is Glycerol-3-phosphate acyltransferase (Brucella suis (strain ATCC 23445 / NCTC 10510)).